A 271-amino-acid chain; its full sequence is Tryptophan synthase alpha chain (271 aa).

Active-site proton acceptor residues include Glu-49 and Asp-60.

The protein belongs to the TrpA family. Tetramer of two alpha and two beta chains.

It carries out the reaction (1S,2R)-1-C-(indol-3-yl)glycerol 3-phosphate + L-serine = D-glyceraldehyde 3-phosphate + L-tryptophan + H2O. The protein operates within amino-acid biosynthesis; L-tryptophan biosynthesis; L-tryptophan from chorismate: step 5/5. Functionally, the alpha subunit is responsible for the aldol cleavage of indoleglycerol phosphate to indole and glyceraldehyde 3-phosphate. This Rhizorhabdus wittichii (strain DSM 6014 / CCUG 31198 / JCM 15750 / NBRC 105917 / EY 4224 / RW1) (Sphingomonas wittichii) protein is Tryptophan synthase alpha chain.